Reading from the N-terminus, the 574-residue chain is Pentatricopeptide repeat-containing protein At5g25630 (574 aa).

The segment covering 1-21 has biased composition (basic and acidic residues); the sequence is MEDVNQEKKKVPPMSEPERST. A disordered region spans residues 1–25; it reads MEDVNQEKKKVPPMSEPERSTPIKT. PPR repeat units lie at residues 44–78, 79–113, 114–148, 149–183, 187–221, 222–258, 259–293, 294–328, 329–363, 364–394, 398–432, and 433–467; these read TVRSRTKLMNVLIERGRPHEAQTVFKTLAETGHRP, SLISYTTLLAAMTVQKQYGSISSIVSEVEQSGTKL, DSIFFNAVINAFSESGNMEDAVQALLKMKELGLNP, TTSTYNTLIKGYGIAGKPERSSELLDLMLEEGNVD, NIRTFNVLVQAWCKKKKVEEAWEVVKKMEECGVRP, DTVTYNTIATCYVQKGETVRAESEVVEKMVMKEKAKP, NGRTCGIVVGGYCREGRVRDGLRFVRRMKEMRVEA, NLVVFNSLINGFVEVMDRDGIDEVLTLMKECNVKA, DVITYSTVMNAWSSAGYMEKAAQVFKEMVKAGVKP, DAHAYSILAKGYVRAKEPKKAEELLETLIVE, NVVIFTTVISGWCSNGSMDDAMRVFNKMCKFGVSP, and NIKTFETLMWGYLEVKQPWKAEEVLQMMRGCGVKP.

It belongs to the PPR family. P subfamily.

The sequence is that of Pentatricopeptide repeat-containing protein At5g25630 from Arabidopsis thaliana (Mouse-ear cress).